The sequence spans 272 residues: Energy-coupling factor transporter ATP-binding protein EcfA1 (272 aa).

In terms of domain architecture, ABC transporter spans 2–237 (IKVSDVCFSY…KNIIEKAKID (236 aa)). 37–44 (GHNGSGKS) serves as a coordination point for ATP.

Belongs to the ABC transporter superfamily. Energy-coupling factor EcfA family. In terms of assembly, forms a stable energy-coupling factor (ECF) transporter complex composed of 2 membrane-embedded substrate-binding proteins (S component), 2 ATP-binding proteins (A component) and 2 transmembrane proteins (T component).

It is found in the cell membrane. In terms of biological role, ATP-binding (A) component of a common energy-coupling factor (ECF) ABC-transporter complex. Unlike classic ABC transporters this ECF transporter provides the energy necessary to transport a number of different substrates. This is Energy-coupling factor transporter ATP-binding protein EcfA1 from Mesomycoplasma hyopneumoniae (strain J / ATCC 25934 / NCTC 10110) (Mycoplasma hyopneumoniae).